A 272-amino-acid polypeptide reads, in one-letter code: Indole-3-glycerol phosphate synthase (272 aa).

It belongs to the TrpC family.

The catalysed reaction is 1-(2-carboxyphenylamino)-1-deoxy-D-ribulose 5-phosphate + H(+) = (1S,2R)-1-C-(indol-3-yl)glycerol 3-phosphate + CO2 + H2O. Its pathway is amino-acid biosynthesis; L-tryptophan biosynthesis; L-tryptophan from chorismate: step 4/5. This Mycolicibacterium vanbaalenii (strain DSM 7251 / JCM 13017 / BCRC 16820 / KCTC 9966 / NRRL B-24157 / PYR-1) (Mycobacterium vanbaalenii) protein is Indole-3-glycerol phosphate synthase.